The sequence spans 75 residues: Protein SlyX homolog (75 aa).

Belongs to the SlyX family.

The sequence is that of Protein SlyX homolog from Vibrio vulnificus (strain CMCP6).